The following is a 455-amino-acid chain: SUN domain-containing protein 2 (455 aa).

A compositionally biased stretch (polar residues) spans 1 to 12; the sequence is MSASTVSITASP. The disordered stretch occupies residues 1 to 99; it reads MSASTVSITA…RTRKSQGNKI (99 aa). Ser2 bears the N-acetylserine mark. Over 2–105 the chain is Nuclear; that stretch reads SASTVSITAS…GNKIDRGKWK (104 aa). Ser63 carries the phosphoserine modification. The span at 74-88 shows a compositional bias: low complexity; the sequence is KSGSTATGTNTTTTQ. Residues 88-95 carry the Nuclear localization signal motif; it reads QRRTRKSQ. The chain crosses the membrane as a helical span at residues 106-128; the sequence is TVVRVFAKQFGALLLLVGLIQLI. Over 129 to 455 the chain is Perinuclear space; it reads RKLTLKDSSL…ELDSVSVAHA (327 aa). Residues 201-225 are a coiled coil; sequence LHSELKKVESKTERLQVSVDELNAK. One can recognise an SUN domain in the interval 285-447; it reads GGAFVMGHSD…YRFRVHGREL (163 aa).

Forms homomers (e.g. dimers, trimers and tetramers) and heteromers with SUN1. Interacts with SUN3, SUN4 and TIK. Core component of the LINC complex which is composed of inner nuclear membrane SUN domain-containing proteins coupled to outer nuclear membrane WIP and WIT proteins. The LINC complex also involves nucleoskeletal proteins CRWN/LINC and possibly KAKU4 and the cytoskeletal myosin KAKU1. Interacts with LINC1, WIP1, WIP2 and WIP3 at the nuclear envelope (NE). Interacts with SINE1, SINE2, SINE3 and SINE4. Interacts with NEAP1, NEA2 and NEAP3. In terms of tissue distribution, expressed in roots, hypocotyls, cotyledons and leaves and inflorescences.

It is found in the nucleus inner membrane. It localises to the cytoplasm. Its subcellular location is the cytoskeleton. The protein localises to the phragmoplast. The protein resides in the endoplasmic reticulum membrane. It is found in the nucleus envelope. Component of SUN-protein-containing multivariate complexes also called LINC complexes which link the nucleoskeleton and cytoskeleton by providing versatile outer nuclear membrane attachment sites for cytoskeletal filaments. Required for the maintenance and/or formation of polarized nuclear shape in root hairs. Modulates the anchoring and mobility of WIP proteins in the nuclear envelope (NE). In association with SUN1, may be involved in telomere attachment to nuclear envelope in the prophase of meiosis. As component of the SUN-WIP-WIT2-KAKU1 complex, mediates the transfer of cytoplasmic forces to the nuclear envelope (NE), leading to nuclear shape changes. This Arabidopsis thaliana (Mouse-ear cress) protein is SUN domain-containing protein 2.